Reading from the N-terminus, the 226-residue chain is Probable endolytic peptidoglycan transglycosylase RlpA (226 aa).

The N-terminal stretch at 1–26 is a signal peptide; sequence MERFLGFRTPLGALGVVILLTLILSS. Cysteine 27 carries the N-palmitoyl cysteine lipid modification. Residue cysteine 27 is the site of S-diacylglycerol cysteine attachment.

It belongs to the RlpA family.

It is found in the cell membrane. Functionally, lytic transglycosylase with a strong preference for naked glycan strands that lack stem peptides. The sequence is that of Probable endolytic peptidoglycan transglycosylase RlpA from Aquifex aeolicus (strain VF5).